A 130-amino-acid polypeptide reads, in one-letter code: MAENQYYGTGRRKSSAARVFIKPGTGNIVINKRSLEVYFGRPTARMVVNQPLELVEMTDKLDLYITVSGGGISGQAGAIRHGITRALMQYDESLRPALRAAGYVTRDARCVERKKVGLRKARRKPQFSKR.

This sequence belongs to the universal ribosomal protein uS9 family.

The protein is Small ribosomal subunit protein uS9 of Aliivibrio fischeri (strain MJ11) (Vibrio fischeri).